The following is a 171-amino-acid chain: ATP synthase subunit b (171 aa).

The helical transmembrane segment at 14-34 (LGDMLFIGISFIVLMALISVV) threads the bilayer. The span at 56–97 (SAQKSRQEASDLADQRRDALSHSRAEASEIVADAKKSGEKQR) shows a compositional bias: basic and acidic residues. Residues 56–104 (SAQKSRQEASDLADQRRDALSHSRAEASEIVADAKKSGEKQRSSIVADA) are disordered.

The protein belongs to the ATPase B chain family. In terms of assembly, F-type ATPases have 2 components, F(1) - the catalytic core - and F(0) - the membrane proton channel. F(1) has five subunits: alpha(3), beta(3), gamma(1), delta(1), epsilon(1). F(0) has three main subunits: a(1), b(2) and c(10-14). The alpha and beta chains form an alternating ring which encloses part of the gamma chain. F(1) is attached to F(0) by a central stalk formed by the gamma and epsilon chains, while a peripheral stalk is formed by the delta and b chains.

The protein localises to the cell membrane. Functionally, f(1)F(0) ATP synthase produces ATP from ADP in the presence of a proton or sodium gradient. F-type ATPases consist of two structural domains, F(1) containing the extramembraneous catalytic core and F(0) containing the membrane proton channel, linked together by a central stalk and a peripheral stalk. During catalysis, ATP synthesis in the catalytic domain of F(1) is coupled via a rotary mechanism of the central stalk subunits to proton translocation. Component of the F(0) channel, it forms part of the peripheral stalk, linking F(1) to F(0). This is ATP synthase subunit b from Lactiplantibacillus plantarum (strain ATCC BAA-793 / NCIMB 8826 / WCFS1) (Lactobacillus plantarum).